Here is a 187-residue protein sequence, read N- to C-terminus: Adenylate kinase 1 (187 aa).

14–19 (GSGKGT) provides a ligand contact to ATP. The NMP stretch occupies residues 34 to 63 (STGDMLRQAIADGTELGNQAKGYMDKGELV). Residues T35, R40, 61–63 (ELV), 89–92 (GFPR), and Q96 contribute to the AMP site. Residues 130-136 (ARGRADD) are LID. ATP is bound at residue R131. AMP contacts are provided by R133 and R144. Position 172 (Q172) interacts with ATP.

The protein belongs to the adenylate kinase family. As to quaternary structure, monomer.

It localises to the cytoplasm. It carries out the reaction AMP + ATP = 2 ADP. It functions in the pathway purine metabolism; AMP biosynthesis via salvage pathway; AMP from ADP: step 1/1. Catalyzes the reversible transfer of the terminal phosphate group between ATP and AMP. Plays an important role in cellular energy homeostasis and in adenine nucleotide metabolism. This is Adenylate kinase 1 from Synechocystis sp. (strain ATCC 27184 / PCC 6803 / Kazusa).